The chain runs to 345 residues: Anthranilate phosphoribosyltransferase (345 aa).

5-phospho-alpha-D-ribose 1-diphosphate is bound by residues Gly81, 84 to 85 (GD), Ser89, 91 to 94 (NVST), 109 to 117 (KHGNRAATS), and Ala121. Gly81 lines the anthranilate pocket. Ser93 is a binding site for Mg(2+). Residue Asn112 coordinates anthranilate. Arg167 is a binding site for anthranilate. 2 residues coordinate Mg(2+): Asp226 and Glu227.

This sequence belongs to the anthranilate phosphoribosyltransferase family. Homodimer. Mg(2+) is required as a cofactor.

It carries out the reaction N-(5-phospho-beta-D-ribosyl)anthranilate + diphosphate = 5-phospho-alpha-D-ribose 1-diphosphate + anthranilate. The protein operates within amino-acid biosynthesis; L-tryptophan biosynthesis; L-tryptophan from chorismate: step 2/5. In terms of biological role, catalyzes the transfer of the phosphoribosyl group of 5-phosphorylribose-1-pyrophosphate (PRPP) to anthranilate to yield N-(5'-phosphoribosyl)-anthranilate (PRA). The polypeptide is Anthranilate phosphoribosyltransferase (Methylobacterium radiotolerans (strain ATCC 27329 / DSM 1819 / JCM 2831 / NBRC 15690 / NCIMB 10815 / 0-1)).